We begin with the raw amino-acid sequence, 311 residues long: MTKIIFMGTPDFSATVLKGLIENPSYQLLAVVTQPDRAVGRKKEIKMSPVKEVALEHHIPVYQPEKLSGSQELESIMSLDADGIVTAAFGQFLPTKLLDSVTFAVNVHASLLPKYRGGAPIHYALINGEEEAGVTIMEMVKEMDAGDMIAKASTPILEDDNVGTMFDKLAILGRDLLIKTLPDYLSGQLKPVAQNHAEATFSPNITSEQEKLDFTKSARAIFNQVRGMNPWPIAHTYFNGERFKIYELLAIEGQGAPGQVIEKTKDSLIVATGSGAVSLRVVQPSGKPKMTIKDYLNGLGRDIKVGDYFGQ.

110–113 (SLLP) lines the (6S)-5,6,7,8-tetrahydrofolate pocket.

This sequence belongs to the Fmt family.

The catalysed reaction is L-methionyl-tRNA(fMet) + (6R)-10-formyltetrahydrofolate = N-formyl-L-methionyl-tRNA(fMet) + (6S)-5,6,7,8-tetrahydrofolate + H(+). Functionally, attaches a formyl group to the free amino group of methionyl-tRNA(fMet). The formyl group appears to play a dual role in the initiator identity of N-formylmethionyl-tRNA by promoting its recognition by IF2 and preventing the misappropriation of this tRNA by the elongation apparatus. This chain is Methionyl-tRNA formyltransferase, found in Streptococcus uberis (strain ATCC BAA-854 / 0140J).